The primary structure comprises 325 residues: Probable conjugal transfer protein TrbB (325 aa).

151 to 158 (GGTASGKT) serves as a coordination point for ATP.

The protein belongs to the GSP E family.

It is found in the cytoplasm. The polypeptide is Probable conjugal transfer protein TrbB (trbB) (Sinorhizobium fredii (strain NBRC 101917 / NGR234)).